The chain runs to 420 residues: Tol-Pal system protein TolB (420 aa).

An N-terminal signal peptide occupies residues 1–21 (MKLFVHLVLFISLFIPYFTKA).

This sequence belongs to the TolB family. In terms of assembly, the Tol-Pal system is composed of five core proteins: the inner membrane proteins TolA, TolQ and TolR, the periplasmic protein TolB and the outer membrane protein Pal. They form a network linking the inner and outer membranes and the peptidoglycan layer.

It localises to the periplasm. Functionally, part of the Tol-Pal system, which plays a role in outer membrane invagination during cell division and is important for maintaining outer membrane integrity. This chain is Tol-Pal system protein TolB, found in Wolbachia pipientis wMel.